The following is a 437-amino-acid chain: uncharacterized protein (437 aa).

Basic residues-rich tracts occupy residues 1–29, 81–91, and 101–118; these read MDTP…RHRN, LRGRHPRVRRV, and RRRH…GRNR. 2 disordered regions span residues 1–31 and 77–437; these read MDTP…RNDH and EHVP…QGTR. Over residues 119–132 the composition is skewed to basic and acidic residues; that stretch reads HAGDRRAPGVDSRL. Basic residues predominate over residues 133–142; the sequence is RQQHQHPRGR. Basic and acidic residues predominate over residues 143 to 164; that stretch reads HASDRVQDGAHPRRQRLREQPR. Positions 165 to 190 are enriched in basic residues; the sequence is HAGRPRRRQPPRRGRSRGTHRRHLRQ. Basic and acidic residues-rich tracts occupy residues 198 to 209 and 217 to 253; these read GPDEDQAREFRG and HPPT…EAGR. Basic residues-rich tracts occupy residues 284 to 293 and 324 to 348; these read TVHRGGRLRG and PHSR…RVRH. Low complexity predominate over residues 371–382; it reads DAAAYASVPAHA.

This is an uncharacterized protein from Haloferax lucentense (strain DSM 14919 / JCM 9276 / NCIMB 13854 / Aa 2.2) (Haloferax alicantei).